The following is a 966-amino-acid chain: Phosphoenolpyruvate carboxylase (966 aa).

Position 10 is a phosphoserine (S10). Catalysis depends on residues H171 and K601.

This sequence belongs to the PEPCase type 1 family. In terms of assembly, homotetramer. The cofactor is Mg(2+).

The protein localises to the cytoplasm. It carries out the reaction oxaloacetate + phosphate = phosphoenolpyruvate + hydrogencarbonate. Its activity is regulated as follows. By light-reversible phosphorylation. In terms of biological role, through the carboxylation of phosphoenolpyruvate (PEP) it forms oxaloacetate, a four-carbon dicarboxylic acid source for the tricarboxylic acid cycle. In Medicago sativa (Alfalfa), this protein is Phosphoenolpyruvate carboxylase (PEPC).